Reading from the N-terminus, the 110-residue chain is Hydrogenase maturation factor HypA (110 aa).

A Ni(2+)-binding site is contributed by histidine 2. Positions 70, 73, 86, and 89 each coordinate Zn(2+).

It belongs to the HypA/HybF family.

Functionally, involved in the maturation of [NiFe] hydrogenases. Required for nickel insertion into the metal center of the hydrogenase. In Geobacter metallireducens (strain ATCC 53774 / DSM 7210 / GS-15), this protein is Hydrogenase maturation factor HypA.